Consider the following 161-residue polypeptide: S-ribosylhomocysteine lyase (161 aa).

Residues histidine 57, histidine 61, and cysteine 127 each coordinate Fe cation.

This sequence belongs to the LuxS family. Homodimer. The cofactor is Fe cation.

The enzyme catalyses S-(5-deoxy-D-ribos-5-yl)-L-homocysteine = (S)-4,5-dihydroxypentane-2,3-dione + L-homocysteine. Its function is as follows. Involved in the synthesis of autoinducer 2 (AI-2) which is secreted by bacteria and is used to communicate both the cell density and the metabolic potential of the environment. The regulation of gene expression in response to changes in cell density is called quorum sensing. Catalyzes the transformation of S-ribosylhomocysteine (RHC) to homocysteine (HC) and 4,5-dihydroxy-2,3-pentadione (DPD). This Streptococcus equi subsp. equi (strain 4047) protein is S-ribosylhomocysteine lyase.